Reading from the N-terminus, the 201-residue chain is Large ribosomal subunit protein uL4 (201 aa).

The disordered stretch occupies residues 45 to 71 (AQKTRAEVTGSGKKPWRQKGTGRARAG).

The protein belongs to the universal ribosomal protein uL4 family. Part of the 50S ribosomal subunit.

In terms of biological role, one of the primary rRNA binding proteins, this protein initially binds near the 5'-end of the 23S rRNA. It is important during the early stages of 50S assembly. It makes multiple contacts with different domains of the 23S rRNA in the assembled 50S subunit and ribosome. Forms part of the polypeptide exit tunnel. This is Large ribosomal subunit protein uL4 from Shewanella loihica (strain ATCC BAA-1088 / PV-4).